Here is a 169-residue protein sequence, read N- to C-terminus: Proepiregulin (169 aa).

Positions 1–29 (MTAGRRMEMLCAGRVPALLLCLGFHLLQA) are cleaved as a signal peptide. Positions 30–62 (VLSTTVIPSCIPGESSDNCTALVQTEDNPRVAQ) are excised as a propeptide. An N-linked (GlcNAc...) asparagine glycan is attached at Asn-47. Over 60-119 (VAQVSITKCSSDMNGYCLHGQCIYLVDMSQNYCRCEVGYTGVRCEHFFLTVHQPLSKEYV) the chain is Extracellular. Positions 64-104 (SITKCSSDMNGYCLHGQCIYLVDMSQNYCRCEVGYTGVRCE) constitute an EGF-like domain. 3 disulfide bridges follow: Cys-68/Cys-81, Cys-76/Cys-92, and Cys-94/Cys-103. The propeptide at 109–169 (TVHQPLSKEY…TSGDPELPQV (61 aa)) is removed in mature form. A helical membrane pass occupies residues 120 to 140 (ALTVILIILFLITVVGSTYYF). Residues 141–169 (CRWYRNRKSKEPKKEYERVTSGDPELPQV) are Cytoplasmic-facing.

In terms of assembly, interacts with EGFR and ERBB4. In terms of tissue distribution, in normal adults, expressed predominantly in the placenta and peripheral blood leukocytes. High levels were detected in carcinomas of the bladder, lung, kidney and colon.

The protein resides in the secreted. It localises to the extracellular space. It is found in the cell membrane. In terms of biological role, ligand of the EGF receptor/EGFR and ERBB4. Stimulates EGFR and ERBB4 tyrosine phosphorylation. Contributes to inflammation, wound healing, tissue repair, and oocyte maturation by regulating angiogenesis and vascular remodeling and by stimulating cell proliferation. The chain is Proepiregulin (EREG) from Homo sapiens (Human).